We begin with the raw amino-acid sequence, 579 residues long: MNTAPSRPSPTRRDPYGFGDSRDSRRDRSPIRGSPRREPRDGRNGRDARDSRDIRDPRDLRDHRHSRDLRDHRDSRSVRDVRDVRDLRDFRDLRDSRDFRDQRDPMYDRYRDMRDSRDPMYRREGSYDRYLRMDDYCRRKDDSYFDRYRDSFDGRGPPGPESQSRAKERLKREERRREELYRQYFEEIQRRFDAERPVDCSVIVVNKQTKDYAESVGRKVRDLGMVVDLIFLNTEVSLSQALEDVSRGGSPFAIVITQQHQIHRSCTVNIMFGTPQEHRNMPQADAMVLVARNYERYKNECREKEREEIARQAAKMADEAILQERERGGPEEGVRGGHPPAIQSLINLLADNRYLTAEETDKIINYLRERKERLMRSSTDSLPGPISRQPLGATSGASLKTQPSSQPLQSGQVLPSATPTPSAPPTSQQELQAKILSLFNSGTVTANSSSASPSVAAGNTPNQNFSTAANSQPQQRSQASGNQPPSILGQGGSAQNMGPRPGAPSQGLFGQPSSRLAPASNMTSQRPVSSTGINFDNPSVQKALDTLIQSGPALSHLVSQTTAQMGQPQAPMGSYQRHY.

An N-acetylmethionine modification is found at methionine 1. The tract at residues 1–78 (MNTAPSRPSP…LRDHRDSRSV (78 aa)) is disordered. The segment at 1–158 (MNTAPSRPSP…RDSFDGRGPP (158 aa)) is transcription repression. Threonine 3 is subject to Phosphothreonine. Serine 9, serine 21, serine 24, serine 29, and serine 34 each carry phosphoserine. 2 stretches are compositionally biased toward basic and acidic residues: residues 11-62 (TRRD…DLRD) and 68-78 (DLRDHRDSRSV). Serine 96, serine 116, serine 126, serine 143, and serine 151 each carry phosphoserine. Residues 148–173 (YRDSFDGRGPPGPESQSRAKERLKRE) form a disordered region. Positions 164-173 (SRAKERLKRE) are enriched in basic and acidic residues. Threonine 274 is subject to Phosphothreonine. An LXXLL motif motif is present at residues 345 to 349 (LINLL). 3 disordered regions span residues 375–428 (MRSS…PTSQ), 444–537 (VTAN…NFDN), and 560–579 (QTTAQMGQPQAPMGSYQRHY). Serine 378 carries the phosphoserine modification. Threonine 379 bears the Phosphothreonine mark. Serine 381 carries the phosphoserine modification. Residues 395 to 413 (SGASLKTQPSSQPLQSGQV) are compositionally biased toward polar residues. Positions 446–457 (ANSSSASPSVAA) are enriched in low complexity. The transcription activation stretch occupies residues 458–579 (GNTPNQNFST…APMGSYQRHY (122 aa)). 2 stretches are compositionally biased toward polar residues: residues 459–485 (NTPNQNFSTAANSQPQQRSQASGNQPP) and 520–537 (SNMTSQRPVSSTGINFDN).

Binds HTATIP2/TIP30. Interacts with YLPM1. Forms a complex with ILF2, ILF3, YLPM1, KHDRBS1, RBMX and PPP1CA. As to expression, widely expressed.

The protein localises to the nucleus. Nuclear receptor coregulator that can have both coactivator and corepressor functions. Interacts with nuclear receptors for steroids (ESR1 and ESR2) independently of the steroid binding domain (AF-2) of the ESR receptors, and with the orphan nuclear receptor NR1D2. Involved in the coactivation of nuclear steroid receptors (ER) as well as the corepression of MYC in response to 17-beta-estradiol (E2). The polypeptide is Nuclear receptor coactivator 5 (NCOA5) (Homo sapiens (Human)).